The sequence spans 372 residues: MINYGVVGVGYFGAELARFMNMHDNAKITCVYDPENGENIARELQCINMSSLDALVSSKLVDCVIVATPNYLHKEPVIKAAKNKKHVFCEKPIALSYEDCVDMVKACKEAGVTFMAGHIMNFFNGVQYARKLIKEGVIGEILSCHTKRNGWENKQERLSWKKMKEQSGGHLYHHIHELDCVQHLLGEIPETVTMIGGNLAHSGPGFGNEDDMLFMTLEFPSGKLATLEWGSAFNWPEHYVIINGTKGSIKIDMQETAGSLRIGGQTKHFLVHETQEEDDDRRKGNMTSEMDGAIAYGHPGKKTPLWLASLIRKETLFLHNILCGAKPEEDYIDLLNGEAAMSAIATADAATLSRSQDRKVKISEIIKHTSVM.

NAD(+) is bound by residues Tyr-11, Phe-12, Asp-33, Asn-36, Thr-68, Asn-70, His-73, Glu-90, Lys-91, and Trp-160.

Belongs to the Gfo/Idh/MocA family. Homodimer. NAD(+) is required as a cofactor.

It catalyses the reaction N-acetyl-2,7-anhydro-alpha-neuraminate + H2O = N-acetyl-alpha-neuraminate. The enzyme catalyses 2-deoxy-2,3-dehydro-N-acetylneuraminate + H2O = N-acetyl-alpha-neuraminate. Its activity is regulated as follows. All conversions require NAD(+) as a cofactor, which is regenerated in the reaction. The presence of EGTA and several divalent cations does not affect the activity. In terms of biological role, hydratase involved in the degradation of sialic acids. Catalyzes the reversible conversion of the dehydrated form of N-acetylneuraminate (Neu5Ac), 2,7-anhydro-N-acetylneuraminate (2,7-AN), to Neu5Ac. Also catalyzes the irreversible conversion of 2-deoxy-2,3-didehydro-N-acetylneuraminate (2,3-EN) to Neu5Ac. The reaction mechanism involves keto intermediates and the transient formation of NADH. The chain is 2,7-anhydro-N-acetylneuraminate hydratase from Escherichia coli (strain K12).